Consider the following 511-residue polypeptide: MKLVYWMYAGPAHIGTLRVASSFKNVHAIMHAPLGDDYFNVMRSMLERERDFTPVTASIVDRHVLTRGSQDKVVDNITRKDKEERPNLIILTPTCTSSILQEDLQNFVDRASIISDSDVILADVNHYRVNELQAADKTLEQVVRYYLGKARRRRTLDQSITDVPSANIIGISTLGFHNQHDFRELKRLLQDLGIKINQVIPEGSFVEDLENLPKAWFNFVPYREIGLMTAVYLEKEFGIPYVSVTPMGVVDTAKCIRQIQKHINNLAVVALEETVDYEPYVYQQTQFVSQAIWFSKSIDCQNLKKKKAVIFGDATHAASMTKILNREMGIRVSCAGTYCKHDKEWFNEQVHNFCDEVLITDDHAEVANKVARIEPSAIFGTQMERHIGKRLNIPCGVVSAPVHIQNFPLGYRPFSGYEGTNQIADSVYNSFIPGMEDHFIDLFGGHDTKEVIMKSLCTEKGVIWDPESQLELSKIPSFMRSKIKRKIDKFAVHNGFTKINIKIMYAALICL.

Asp36 lines the [4Fe-4S] cluster pocket. Catalysis depends on Asp299, which acts as the Proton donor. 434–435 contacts substrate; it reads GM.

This sequence belongs to the ChlB/BchB/BchZ family. As to quaternary structure, protochlorophyllide reductase is composed of three subunits; ChlL, ChlN and ChlB. Forms a heterotetramer of two ChlB and two ChlN subunits. Requires [4Fe-4S] cluster as cofactor.

The protein resides in the plastid. Its subcellular location is the chloroplast. It carries out the reaction chlorophyllide a + oxidized 2[4Fe-4S]-[ferredoxin] + 2 ADP + 2 phosphate = protochlorophyllide a + reduced 2[4Fe-4S]-[ferredoxin] + 2 ATP + 2 H2O. The protein operates within porphyrin-containing compound metabolism; chlorophyll biosynthesis (light-independent). Its function is as follows. Component of the dark-operative protochlorophyllide reductase (DPOR) that uses Mg-ATP and reduced ferredoxin to reduce ring D of protochlorophyllide (Pchlide) to form chlorophyllide a (Chlide). This reaction is light-independent. The NB-protein (ChlN-ChlB) is the catalytic component of the complex. In Huperzia lucidula (Shining clubmoss), this protein is Light-independent protochlorophyllide reductase subunit B.